The primary structure comprises 104 residues: MAIIPDKQDSSVLERKEQKLKPPSMYKVVLLNDDFTPMEFVVMVVQEYFKKDRETATQIMLKVHREGRGVCGVYTRDIASTKVEQVVTHARQAGHPLQCVMEEA.

It belongs to the ClpS family. Binds to the N-terminal domain of the chaperone ClpA.

Involved in the modulation of the specificity of the ClpAP-mediated ATP-dependent protein degradation. This Burkholderia mallei (strain NCTC 10247) protein is ATP-dependent Clp protease adapter protein ClpS.